We begin with the raw amino-acid sequence, 287 residues long: ATP synthase gamma chain (287 aa).

The protein belongs to the ATPase gamma chain family. In terms of assembly, F-type ATPases have 2 components, CF(1) - the catalytic core - and CF(0) - the membrane proton channel. CF(1) has five subunits: alpha(3), beta(3), gamma(1), delta(1), epsilon(1). CF(0) has three main subunits: a, b and c.

It is found in the cell inner membrane. Produces ATP from ADP in the presence of a proton gradient across the membrane. The gamma chain is believed to be important in regulating ATPase activity and the flow of protons through the CF(0) complex. The polypeptide is ATP synthase gamma chain (Xanthomonas axonopodis pv. citri (strain 306)).